We begin with the raw amino-acid sequence, 504 residues long: Anaerobic nitric oxide reductase transcription regulator NorR (504 aa).

Asp-57 is subject to 4-aspartylphosphate. The 230-residue stretch at 187-416 (MIGLSPGMTQ…LEHAIHRAVV (230 aa)) folds into the Sigma-54 factor interaction domain. Residues 215 to 222 (GETGTGKE) and 278 to 287 (ADNGTLFLDE) each bind ATP. The H-T-H motif DNA-binding region spans 479–498 (WAACARMLETDVANLHRLAK).

It functions in the pathway nitrogen metabolism; nitric oxide reduction. Functionally, required for the expression of anaerobic nitric oxide (NO) reductase, acts as a transcriptional activator for at least the norVW operon. Activation also requires sigma-54. The sequence is that of Anaerobic nitric oxide reductase transcription regulator NorR from Escherichia coli O6:H1 (strain CFT073 / ATCC 700928 / UPEC).